Reading from the N-terminus, the 969-residue chain is Poly(ADP-ribose) glycohydrolase (969 aa).

Disordered stretches follow at residues 1-149, 161-341, and 368-400; these read MSAG…QQQT, HAEQ…CQAR, and NNAG…GKRD. Positions 1 to 449 are A-domain; it reads MSAGPGWEPC…LPPEKKWLGT (449 aa). The Nuclear localization signal signature appears at 10–16; that stretch reads CTKRPRW. A compositionally biased stretch (polar residues) spans 69–84; sequence NATSFVFKQKTITTWM. Residues 77–84 carry the PIP-box (PCNA interacting peptide) motif; that stretch reads QKTITTWM. Residues 87–100 are compositionally biased toward basic and acidic residues; that stretch reads KGPKTAESESKENN. The segment covering 101 to 113 has biased composition (polar residues); sequence NTRIDSMMSSVQK. The span at 116–125 shows a compositional bias: basic and acidic residues; it reads FYPHKVEKLE. Polar residues-rich tracts occupy residues 128–149 and 179–189; these read PQLN…QQQT and QLSNANIGQSP. The residue at position 135 (Ser-135) is a Phosphoserine. Thr-137 carries the post-translational modification Phosphothreonine. Positions 190 to 205 are enriched in basic and acidic residues; that stretch reads HTDDHSDTDHEEDRDN. Ser-195 is subject to Phosphoserine. Thr-197 bears the Phosphothreonine mark. Over residues 226–237 the composition is skewed to polar residues; the sequence is ARSNCKCSGSRQ. A phosphoserine mark is found at Ser-256, Ser-259, Ser-281, Ser-286, Ser-293, Ser-297, and Ser-311. The segment covering 275 to 284 has biased composition (polar residues); that stretch reads KLTGQESSLG. Over residues 311–325 the composition is skewed to acidic residues; it reads SEADEETSPVFDEQD. 2 stretches are compositionally biased toward polar residues: residues 329-339 and 369-387; these read SQTANKLSSCQ and NAGT…SSLN. Lys-334 is subject to N6-acetyllysine. The interval 603 to 788 is catalytic; the sequence is QPIPLLKQKM…TEQYSEYTGY (186 aa). Residue 719–720 coordinates substrate; the sequence is IE. Asp-730 is an active-site residue. Residues Asn-733 and Gln-747 each contribute to the substrate site. Active-site residues include Glu-748 and Glu-749. Residues Tyr-788 and 862–867 each bind substrate; that span reads NWGCGA.

Belongs to the poly(ADP-ribose) glycohydrolase family. In terms of assembly, interacts with PCNA. Interacts with NUDT5.

The protein resides in the nucleus. It catalyses the reaction [(1''-&gt;2')-ADP-alpha-D-ribose](n) + H2O = [(1''-&gt;2')-ADP-alpha-D-ribose](n-1) + ADP-D-ribose. Functionally, poly(ADP-ribose) glycohydrolase that degrades poly(ADP-ribose) by hydrolyzing the ribose-ribose bonds present in poly(ADP-ribose). PARG acts both as an endo- and exoglycosidase, releasing poly(ADP-ribose) of different length as well as ADP-ribose monomers. It is however unable to cleave the ester bond between the terminal ADP-ribose and ADP-ribosylated residues, leaving proteins that are mono-ADP-ribosylated. Poly(ADP-ribose) is synthesized after DNA damage is only present transiently and is rapidly degraded by PARG. Required to prevent detrimental accumulation of poly(ADP-ribose) upon prolonged replicative stress, while it is not required for recovery from transient replicative stress. Responsible for the prevalence of mono-ADP-ribosylated proteins in cells, thanks to its ability to degrade poly(ADP-ribose) without cleaving the terminal protein-ribose bond. Required for retinoid acid-dependent gene transactivation, probably by removing poly(ADP-ribose) from histone demethylase KDM4D, allowing chromatin derepression at RAR-dependent gene promoters. Involved in the synthesis of ATP in the nucleus, together with PARP1, NMNAT1 and NUDT5. Nuclear ATP generation is required for extensive chromatin remodeling events that are energy-consuming. This Mus musculus (Mouse) protein is Poly(ADP-ribose) glycohydrolase.